A 670-amino-acid chain; its full sequence is Probable E3 ubiquitin ligase complex SCF subunit sconB (670 aa).

The tract at residues 1–38 (MSSPPPFTSIFGGPAESAEEIDADADNSQLKPHNRSNV) is disordered. The span at 27–38 (NSQLKPHNRSNV) shows a compositional bias: polar residues. The F-box domain occupies 163–209 (IDFIAALPPEISFKILCYLDTTSLCKAAQVSRRWRALADDDVVWHRM). The disordered stretch occupies residues 249 to 287 (VNGTSPKATPALPEDASPVADSSGTGKRKPEPSEEETAV). 7 WD repeats span residues 339–376 (GHTN…EIRT), 379–418 (GHES…STYT), 420–456 (HRGG…TCLL), 458–499 (GHTD…RTFH), 553–596 (ISQS…CLRT), 599–636 (GHLE…CERT), and 639–670 (GHSG…SFQS).

Belongs to the WD repeat MET30/SCONB/SCON-2 family. Component of the SCF(sconB) E3 ubiquitin ligase complex.

It functions in the pathway protein modification; protein ubiquitination. Component of the SCF(sconB) E3 ubiquitin ligase complex involved in the regulation of sulfur metabolite repression, probably by mediating the inactivation or degradation of the metR transcription factor. The polypeptide is Probable E3 ubiquitin ligase complex SCF subunit sconB (sconB) (Aspergillus niger (strain ATCC MYA-4892 / CBS 513.88 / FGSC A1513)).